We begin with the raw amino-acid sequence, 453 residues long: Probable glycine dehydrogenase (decarboxylating) subunit 1 (453 aa).

The protein belongs to the GcvP family. N-terminal subunit subfamily. The glycine cleavage system is composed of four proteins: P, T, L and H. In this organism, the P 'protein' is a heterodimer of two subunits.

It catalyses the reaction N(6)-[(R)-lipoyl]-L-lysyl-[glycine-cleavage complex H protein] + glycine + H(+) = N(6)-[(R)-S(8)-aminomethyldihydrolipoyl]-L-lysyl-[glycine-cleavage complex H protein] + CO2. Its function is as follows. The glycine cleavage system catalyzes the degradation of glycine. The P protein binds the alpha-amino group of glycine through its pyridoxal phosphate cofactor; CO(2) is released and the remaining methylamine moiety is then transferred to the lipoamide cofactor of the H protein. The polypeptide is Probable glycine dehydrogenase (decarboxylating) subunit 1 (Caulobacter sp. (strain K31)).